A 551-amino-acid chain; its full sequence is Membrane protein insertase YidC (551 aa).

A helical transmembrane segment spans residues 3-23; the sequence is ANHIRILLLVTIAIMLISLMG. The span at 30 to 43 shows a compositional bias: low complexity; that stretch reads PSNSSQSQTTQTQQ. The interval 30–61 is disordered; the sequence is PSNSSQSQTTQTQQDNSHYNSDTPATTNVSTS. The segment covering 44 to 61 has biased composition (polar residues); the sequence is DNSHYNSDTPATTNVSTS. The next 3 membrane-spanning stretches (helical) occupy residues 361-381, 431-451, and 504-524; these read LVGN…LIFY, LSGC…YWVL, and IMMF…SGLV.

Belongs to the OXA1/ALB3/YidC family. Type 1 subfamily. As to quaternary structure, interacts with the Sec translocase complex via SecD. Specifically interacts with transmembrane segments of nascent integral membrane proteins during membrane integration.

The protein resides in the cell inner membrane. Functionally, required for the insertion and/or proper folding and/or complex formation of integral membrane proteins into the membrane. Involved in integration of membrane proteins that insert both dependently and independently of the Sec translocase complex, as well as at least some lipoproteins. Aids folding of multispanning membrane proteins. In Francisella philomiragia subsp. philomiragia (strain ATCC 25017 / CCUG 19701 / FSC 153 / O#319-036), this protein is Membrane protein insertase YidC.